The chain runs to 506 residues: Chromosomal replication initiator protein DnaA (506 aa).

Positions 1 to 77 (MECATTATTP…IWAEESGAKR (77 aa)) are domain I, interacts with DnaA modulators. Residues 77–162 (RRVDLAVRNA…AVAGDVASGS (86 aa)) are domain II. Composition is skewed to basic and acidic residues over residues 103–112 (TERTDMHSGD) and 121–142 (SDGRSTDARGADGRGSDARAVE). Residues 103–142 (TERTDMHSGDTRQQSARISDGRSTDARGADGRGSDARAVE) are disordered. The interval 163–384 (PLDARLTFET…GALNKLLAFN (222 aa)) is domain III, AAA+ region. Residues glycine 210, glycine 212, lysine 213, and threonine 214 each contribute to the ATP site. The tract at residues 385-506 (QLTGEPVTLE…EVLKRLALEA (122 aa)) is domain IV, binds dsDNA.

This sequence belongs to the DnaA family. Oligomerizes as a right-handed, spiral filament on DNA at oriC.

The protein localises to the cytoplasm. Functionally, plays an essential role in the initiation and regulation of chromosomal replication. ATP-DnaA binds to the origin of replication (oriC) to initiate formation of the DNA replication initiation complex once per cell cycle. Binds the DnaA box (a 9 base pair repeat at the origin) and separates the double-stranded (ds)DNA. Forms a right-handed helical filament on oriC DNA; dsDNA binds to the exterior of the filament while single-stranded (ss)DNA is stabiized in the filament's interior. The ATP-DnaA-oriC complex binds and stabilizes one strand of the AT-rich DNA unwinding element (DUE), permitting loading of DNA polymerase. After initiation quickly degrades to an ADP-DnaA complex that is not apt for DNA replication. Binds acidic phospholipids. The protein is Chromosomal replication initiator protein DnaA of Xanthobacter autotrophicus (strain ATCC BAA-1158 / Py2).